The primary structure comprises 269 residues: MLVVEGLTCRFGAKAAVDDASFQISPGGFVGVIGRSGAGKSTLLRTINRLVTPTQGRILFDGTDVTALRGKELRQWRARSAMIFQQFNLVGRLDVLTNVLMGRLATMPAWRSLSQTWPEHDKALAMSALEQFDIAALAAQRADQLSGGQQQRVAIARALVQQPDIILADEPIASLDPRNTKIVMDALLRINKHFGITVLCNLHSLDLARSYCDRLIGMAQGRVVFDGAPSALTDHVARELYDLEATDVMGGSPVPAPEGIPALGTAAAA.

The 244-residue stretch at 2-245 (LVVEGLTCRF…VARELYDLEA (244 aa)) folds into the ABC transporter domain. 34 to 41 (GRSGAGKS) provides a ligand contact to ATP.

The protein belongs to the ABC transporter superfamily. Phosphonates importer (TC 3.A.1.9.1) family. The complex is composed of two ATP-binding proteins (PhnC), two transmembrane proteins (PhnE) and a solute-binding protein (PhnD).

Its subcellular location is the cell inner membrane. The enzyme catalyses phosphonate(out) + ATP + H2O = phosphonate(in) + ADP + phosphate + H(+). Part of the ABC transporter complex PhnCDE involved in phosphonates import. Responsible for energy coupling to the transport system. The chain is Phosphonates import ATP-binding protein PhnC from Bradyrhizobium diazoefficiens (strain JCM 10833 / BCRC 13528 / IAM 13628 / NBRC 14792 / USDA 110).